The primary structure comprises 325 residues: Chain length determinant protein (325 aa).

The Cytoplasmic segment spans residues 1–31 (MRVENNNVSGQNHDPEQIDLIDLLVQLWRGK). The helical transmembrane segment at 32–52 (MTIIISVIVAIALAIGYLAVA) threads the bilayer. At 53-294 (KEKWTSTAII…LPIRRDSPKK (242 aa)) the chain is on the periplasmic side. The chain crosses the membrane as a helical span at residues 295–315 (AITLILAVLLGGMVGAGIVLG). Topologically, residues 316–325 (RNALRNYNAK) are cytoplasmic.

This sequence belongs to the WzzB/Cld/Rol family.

Its subcellular location is the cell inner membrane. The protein operates within bacterial outer membrane biogenesis; lipopolysaccharide biosynthesis. In terms of biological role, confers a modal distribution of chain length on the O-antigen component of lipopolysaccharide (LPS). Gives rise to a reduced number of short chain molecules and increases in numbers of longer molecules, with a modal value of 13 (in strain O111/M92) and of 17 (in strain K12). In Escherichia coli, this protein is Chain length determinant protein (wzzB).